The sequence spans 137 residues: MLSPKRTKFRRHHRGRMKGKANRGNSIVYGDFGLQALEPGWIKSRQIESGRRVLTRYVRRNGKLWVCLFPDKPVTMRAAESRMGSGKGMPEYWVAVVKPGKILYELTGLTETVARKALRITGHKMPVKTQIVINKKF.

Residues Met1–Ala21 form a disordered region.

It belongs to the universal ribosomal protein uL16 family. Part of the 50S ribosomal subunit.

It localises to the plastid. The protein localises to the chloroplast. The sequence is that of Large ribosomal subunit protein uL16c from Tupiella akineta (Green alga).